A 96-amino-acid polypeptide reads, in one-letter code: Cytoplasmic envelopment protein 3 (96 aa).

G2 carries N-myristoyl glycine; by host lipidation. The Di-leucine-like internalization motif motif lies at 18–19; sequence LI. The interval 37 to 43 is asp/Glu-rich (acidic); sequence DIESEEE. A Phosphoserine modification is found at S40. The segment at 44 to 96 is disordered; it reads GNFYVPPDMRGVTRAPGRQRLRSSDPPSRHTHRRTPGGACPATQFPPPMSDSE. Over residues 87-96 the composition is skewed to pro residues; the sequence is QFPPPMSDSE.

It belongs to the herpesviridae cytoplasmic envelopment protein 3 family. Interacts with cytoplasmic envelopment protein 2; this interaction is essential for the proper localization of each protein to the assembly complex and thus for the production of infectious virus. Interacts with gE (via C-terminus). Interacts with gD (via C-terminus). Interacts with UL56. Post-translationally, myristoylation and palmitoylation (probably on one or more of the nearby cysteines at the N-terminus) enable membrane-binding and Golgi apparatus-specific targeting and are essential for efficient packaging. In terms of processing, phosphorylated. Phosphorylation does not seem to be required for recycling to the host Golgi apparatus. Packaging is selective for underphosphorylated forms.

It is found in the virion tegument. It localises to the virion membrane. The protein localises to the host cell membrane. Its subcellular location is the host Golgi apparatus membrane. In terms of biological role, plays an important role in the cytoplasmic envelopment of tegument proteins and capsids during the assembly and egress processes. Also participates in viral entry at the fusion step probably by regulating the core fusion machinery. This chain is Cytoplasmic envelopment protein 3, found in Homo sapiens (Human).